The following is a 203-amino-acid chain: Putative 3-methyladenine DNA glycosylase (203 aa).

The protein belongs to the DNA glycosylase MPG family.

The polypeptide is Putative 3-methyladenine DNA glycosylase (Clostridium botulinum (strain Langeland / NCTC 10281 / Type F)).